Reading from the N-terminus, the 585-residue chain is ATP-dependent lipid A-core flippase (585 aa).

The next 6 helical transmembrane spans lie at 25 to 45, 63 to 83, 127 to 146, 150 to 170, 250 to 270, and 277 to 297; these read FLAA…FPAI, WLFY…FGFL, IAYD…TSLI, LSIV…TLIT, QSPL…GVAL, and QTTV…MAPL. The ABC transmembrane type-1 domain occupies 26-309; sequence LAALACMGVA…VTDVNAPIQR (284 aa). Residues 341-577 form the ABC transporter domain; that stretch reads VEFDGVTFTY…DGLYARLYRM (237 aa). ATP is bound at residue 375-382; that stretch reads GPSGSGKT.

Belongs to the ABC transporter superfamily. Lipid exporter (TC 3.A.1.106) family. In terms of assembly, homodimer.

It localises to the cell inner membrane. It carries out the reaction ATP + H2O + lipid A-core oligosaccharideSide 1 = ADP + phosphate + lipid A-core oligosaccharideSide 2.. Involved in lipopolysaccharide (LPS) biosynthesis. Translocates lipid A-core from the inner to the outer leaflet of the inner membrane. Transmembrane domains (TMD) form a pore in the inner membrane and the ATP-binding domain (NBD) is responsible for energy generation. In Dechloromonas aromatica (strain RCB), this protein is ATP-dependent lipid A-core flippase.